We begin with the raw amino-acid sequence, 375 residues long: 23S rRNA (uracil(747)-C(5))-methyltransferase RlmC (375 aa).

[4Fe-4S] cluster is bound by residues Cys-3, Cys-11, Cys-14, and Cys-87. Gln-212, Phe-241, Glu-262, and Asn-307 together coordinate S-adenosyl-L-methionine. Residue Cys-334 is the Nucleophile of the active site.

This sequence belongs to the class I-like SAM-binding methyltransferase superfamily. RNA M5U methyltransferase family. RlmC subfamily.

It carries out the reaction uridine(747) in 23S rRNA + S-adenosyl-L-methionine = 5-methyluridine(747) in 23S rRNA + S-adenosyl-L-homocysteine + H(+). Functionally, catalyzes the formation of 5-methyl-uridine at position 747 (m5U747) in 23S rRNA. This is 23S rRNA (uracil(747)-C(5))-methyltransferase RlmC from Vibrio cholerae serotype O1 (strain ATCC 39541 / Classical Ogawa 395 / O395).